The primary structure comprises 399 residues: Ribose-phosphate pyrophosphokinase 2, chloroplastic (399 aa).

Residues 1–32 (MAAKAAALSSSPFVSSRRLSSPAASLRARTPR) constitute a chloroplast transit peptide. Asp214, His216, Asp225, and Asp229 together coordinate Mg(2+). Residues 299–314 (GKVAIMVDDMIDTAGT) are binding of phosphoribosylpyrophosphate.

It belongs to the ribose-phosphate pyrophosphokinase family. Requires Mg(2+) as cofactor.

Its subcellular location is the plastid. It is found in the chloroplast. The enzyme catalyses D-ribose 5-phosphate + ATP = 5-phospho-alpha-D-ribose 1-diphosphate + AMP + H(+). This chain is Ribose-phosphate pyrophosphokinase 2, chloroplastic, found in Oryza sativa subsp. japonica (Rice).